An 840-amino-acid polypeptide reads, in one-letter code: Probable inorganic carbon transporter subunit DabA (840 aa).

4 residues coordinate Zn(2+): Cys355, Asp357, His539, and Cys554.

Belongs to the inorganic carbon transporter (TC 9.A.2) DabA family. Forms a complex with DabB. Requires Zn(2+) as cofactor.

The protein resides in the cell membrane. Functionally, part of an energy-coupled inorganic carbon pump. In Roseiflexus castenholzii (strain DSM 13941 / HLO8), this protein is Probable inorganic carbon transporter subunit DabA.